A 695-amino-acid polypeptide reads, in one-letter code: GRB2-associated-binding protein 1 (695 aa).

N-acetylserine is present on Ser-2. Residues 5-116 (EVVCSGWLRK…WVRCICDICG (112 aa)) form the PH domain. Residues 204–229 (AKPTFSETDCNDNVPSHQTPASSQSK) are disordered. The segment covering 206 to 229 (PTFSETDCNDNVPSHQTPASSQSK) has biased composition (polar residues). Ser-251, Ser-253, Ser-266, and Ser-304 each carry phosphoserine. The segment at 306-387 (SYDIPPTPGN…PAGMTPSRSN (82 aa)) is disordered. A compositionally biased stretch (polar residues) spans 314–334 (GNTYQIPRTFPESTLGQSSKL). Residue Thr-388 is modified to Phosphothreonine. A phosphoserine mark is found at Ser-403 and Ser-455. Residues 453–659 (PNSPPRQHSG…GSSMADERVD (207 aa)) are disordered. 2 stretches are compositionally biased toward polar residues: residues 457 to 466 (PRQHSGSFTE) and 605 to 617 (FASNSLDGGSSPM). A Phosphotyrosine modification is found at Tyr-628. Phosphothreonine is present on Thr-639. A Phosphoserine modification is found at Ser-652. At Tyr-660 the chain carries Phosphotyrosine. The disordered stretch occupies residues 671-695 (LKSTREAWTDGRQSTESETPTKNVK). Positions 673-685 (STREAWTDGRQST) are enriched in basic and acidic residues. Ser-684 carries the phosphoserine modification. Over residues 686 to 695 (ESETPTKNVK) the composition is skewed to polar residues.

This sequence belongs to the GAB family. As to quaternary structure, identified in a complex containing FRS2, GRB2, GAB1, PIK3R1 and SOS1. Forms a tripartite complex containing GAB1, METTL13 and SPRY2. Within the complex interacts with METTL13. Interacts with GRB2 and with other SH2-containing proteins. Interacts with phosphorylated LAT2. Interacts with PTPRJ. Interacts (phosphorylated) with PTPN11. Interacts with HCK. Phosphorylated on tyrosine residue(s) by the epidermal growth factor receptor (EGFR) and the insulin receptor (INSR). Tyrosine phosphorylation of GAB1 mediates interaction with several proteins that contain SH2 domains. Phosphorylated on tyrosine residues by HCK upon IL6 signaling. Phosphorylated in response to FGFR1 activation. As to expression, expressed in the inner ear (at protein level). Expression is detected in the cochlear duct, spiral limbus region, efferent and afferent nerves, and in spiral ganglion neurons (at protein level).

Its function is as follows. Adapter protein that plays a role in intracellular signaling cascades triggered by activated receptor-type kinases. Plays a role in FGFR1 signaling. Probably involved in signaling by the epidermal growth factor receptor (EGFR) and the insulin receptor (INSR). Involved in the MET/HGF-signaling pathway. The sequence is that of GRB2-associated-binding protein 1 (Gab1) from Mus musculus (Mouse).